A 147-amino-acid chain; its full sequence is RecQ-mediated genome instability protein 2 (147 aa).

The interval 1–20 (MAAAADSFSGGPAGVRLPRS) is disordered. Ala-2 bears the N-acetylalanine mark. A Phosphoserine modification is found at Ser-7. The segment at residues 44 to 114 (SRAAAGRGPL…MGVVQACSPE (71 aa)) is a DNA-binding region (OB).

It belongs to the RMI2 family. As to quaternary structure, component of the RMI complex, containing at least TOP3A, RMI1 and RMI2. The RMI complex interacts with BLM. In terms of processing, phosphorylated during mitosis.

It is found in the nucleus. Its function is as follows. Essential component of the RMI complex, a complex that plays an important role in the processing of homologous recombination intermediates. It is required to regulate sister chromatid segregation and to limit DNA crossover. Essential for the stability, localization, and function of BLM, TOP3A, and complexes containing BLM. In the RMI complex, it is required to target BLM to chromatin and stress-induced nuclear foci and mitotic phosphorylation of BLM. The chain is RecQ-mediated genome instability protein 2 (RMI2) from Homo sapiens (Human).